The primary structure comprises 362 residues: MAQVFNFSSGPAMLPAEVLKLAQQELRDWHGLGTSVMEISHRGKEFIQVAEEAEQDFRDLLNIPSNYKVLFCHGGGRGQFAGVPLNLLGDKTTADYVDAGYWAASAIKEAKKYCAPQIIDAKITVDGKRAVKPMREWQLSDNAAYLHYCPNETIDGIAIDETPDFGPEVVVTADFSSTILSAPLDVSRYGVIYAGAQKNIGPAGLTLVIVREDLLGKAHESCPSILDYTVLNDNDSMFNTPPTFAWYLSGLVFKWLKAQGGVAAMHKINQQKAELLYGVIDNSDFYRNDVAQANRSRMNVPFQLADNTLDKVFLEESFAAGLHALKGHRVVGGMRASIYNAMPIEGVKALTDFMIDFERRHG.

Positions 9 and 42 each coordinate L-glutamate. Residues 76–77 (GR), W102, T153, D174, and Q197 each bind pyridoxal 5'-phosphate. K198 is modified (N6-(pyridoxal phosphate)lysine). 239–240 (NT) contributes to the pyridoxal 5'-phosphate binding site.

The protein belongs to the class-V pyridoxal-phosphate-dependent aminotransferase family. SerC subfamily. Homodimer. Pyridoxal 5'-phosphate is required as a cofactor.

The protein resides in the cytoplasm. The enzyme catalyses O-phospho-L-serine + 2-oxoglutarate = 3-phosphooxypyruvate + L-glutamate. It catalyses the reaction 4-(phosphooxy)-L-threonine + 2-oxoglutarate = (R)-3-hydroxy-2-oxo-4-phosphooxybutanoate + L-glutamate. Its pathway is amino-acid biosynthesis; L-serine biosynthesis; L-serine from 3-phospho-D-glycerate: step 2/3. It functions in the pathway cofactor biosynthesis; pyridoxine 5'-phosphate biosynthesis; pyridoxine 5'-phosphate from D-erythrose 4-phosphate: step 3/5. Catalyzes the reversible conversion of 3-phosphohydroxypyruvate to phosphoserine and of 3-hydroxy-2-oxo-4-phosphonooxybutanoate to phosphohydroxythreonine. The sequence is that of Phosphoserine aminotransferase from Salmonella choleraesuis (strain SC-B67).